A 130-amino-acid chain; its full sequence is UPF0102 protein TDE_2303 (130 aa).

It belongs to the UPF0102 family.

This Treponema denticola (strain ATCC 35405 / DSM 14222 / CIP 103919 / JCM 8153 / KCTC 15104) protein is UPF0102 protein TDE_2303.